Consider the following 245-residue polypeptide: 2,3-bisphosphoglycerate-dependent phosphoglycerate mutase (245 aa).

Substrate is bound by residues Arg8–Asn15, Thr21–Gly22, Arg60, Glu87–Tyr90, Lys98, Arg114–Arg115, and Gly183–Asn184. His9 serves as the catalytic Tele-phosphohistidine intermediate. Residue Glu87 is the Proton donor/acceptor of the active site.

Belongs to the phosphoglycerate mutase family. BPG-dependent PGAM subfamily.

The catalysed reaction is (2R)-2-phosphoglycerate = (2R)-3-phosphoglycerate. It functions in the pathway carbohydrate degradation; glycolysis; pyruvate from D-glyceraldehyde 3-phosphate: step 3/5. In terms of biological role, catalyzes the interconversion of 2-phosphoglycerate and 3-phosphoglycerate. This chain is 2,3-bisphosphoglycerate-dependent phosphoglycerate mutase, found in Bacillus cereus (strain ZK / E33L).